The sequence spans 65 residues: Hirudin-2 (65 aa).

The segment at 1 to 3 (ITY) is interaction with thrombin active site. 3 disulfides stabilise this stretch: C6/C14, C16/C28, and C22/C39. Residues 39 to 65 (CVTGEGTPKPQSHNDGDFEEIPEEYLQ) form a disordered region. T45 is a glycosylation site (O-linked (GalNAc...) threonine). Residues 55-65 (DFEEIPEEYLQ) form an interaction with fibrinogen-binding exosite of thrombin region. A compositionally biased stretch (acidic residues) spans 55 to 65 (DFEEIPEEYLQ). Y63 carries the post-translational modification Sulfotyrosine.

It belongs to the protease inhibitor I14 (hirudin) family.

It is found in the secreted. Its function is as follows. Hirudin is a potent thrombin-specific protease inhibitor. It forms a stable non-covalent complex with alpha-thrombin, thereby abolishing its ability to cleave fibrinogen. The protein is Hirudin-2 of Hirudo medicinalis (Medicinal leech).